Here is a 200-residue protein sequence, read N- to C-terminus: Prophage tail fiber assembly protein homolog TfaE (200 aa).

It belongs to the tfa family.

In Escherichia coli (strain K12), this protein is Prophage tail fiber assembly protein homolog TfaE (tfaE).